A 480-amino-acid chain; its full sequence is Uridine 5'-monophosphate synthase (480 aa).

Ala-2 carries the N-acetylalanine modification. The segment at 2 to 214 is OPRTase; the sequence is AAADALLGSL…AFVAANPNDS (213 aa). At Tyr-37 the chain carries Phosphotyrosine. Ser-214 is subject to Phosphoserine. The tract at residues 215–220 is domain linker; it reads LPSVKK. The OMPdecase stretch occupies residues 221–480; sequence EPKELSFGAR…WEAYLSRLAV (260 aa). Orotidine 5'-phosphate is bound at residue Ser-257. UMP contacts are provided by residues Ser-257, Asp-259, and 281–283; that span reads KIH. Orotidine 5'-phosphate-binding positions include Lys-281, Lys-314, Asp-317, Thr-321, Ser-372, 430 to 432, and 450 to 451; these read QQY and GR. Active-site for OMPdecase activity residues include Lys-314 and Asp-317. UMP is bound by residues Asp-317, Thr-321, Ser-372, 430 to 432, and 450 to 451; these read QQY and GR.

It in the N-terminal section; belongs to the purine/pyrimidine phosphoribosyltransferase family. This sequence in the C-terminal section; belongs to the OMP decarboxylase family. Homodimer; dimerization is required for enzymatic activity.

It carries out the reaction orotidine 5'-phosphate + diphosphate = orotate + 5-phospho-alpha-D-ribose 1-diphosphate. The catalysed reaction is orotidine 5'-phosphate + H(+) = UMP + CO2. It participates in pyrimidine metabolism; UMP biosynthesis via de novo pathway; UMP from orotate: step 1/2. Its pathway is pyrimidine metabolism; UMP biosynthesis via de novo pathway; UMP from orotate: step 2/2. In terms of biological role, bifunctional enzyme catalyzing the last two steps of de novo pyrimidine biosynthesis, orotate phosphoribosyltransferase (OPRT), which converts orotate to orotidine-5'-monophosphate (OMP), and orotidine-5'-monophosphate decarboxylase (ODC), the terminal enzymatic reaction that decarboxylates OMP to uridine monophosphate (UMP). The protein is Uridine 5'-monophosphate synthase (UMPS) of Bos taurus (Bovine).